We begin with the raw amino-acid sequence, 378 residues long: Protein FAM170B (378 aa).

Disordered stretches follow at residues 1–56, 244–265, and 277–378; these read MKHH…LPDD, TRDQKQDQQPVEEEQSLSDSSE, and QQQP…QQGK. Low complexity-rich tracts occupy residues 277-339 and 349-378; these read QQQP…QPLQ and PQKQQQRQQQRQQQPPRQQQKQQPLQQQGK.

It belongs to the FAM170 family. As to quaternary structure, interacts with GOPC. Exclusively expressed in adult testis (at protein level). Expression first started at postnatal week 3 in round spermatids, elongated spermatids and mature sperm.

The protein localises to the cytoplasmic vesicle. It localises to the secretory vesicle. Its subcellular location is the acrosome. It is found in the acrosome outer membrane. Its function is as follows. Plays a role in fertilization through the acrosome reaction. In Mus musculus (Mouse), this protein is Protein FAM170B.